Reading from the N-terminus, the 75-residue chain is Brevinin-2ISc (75 aa).

The signal sequence occupies residues 1 to 22 (MFTLKKSLLLLFFLGTISLSLC). The propeptide at 23–40 (EEERDADEDEGEMTEEEV) is removed in mature form. A disulfide bridge links Cys-69 with Cys-75.

Expressed by the skin glands.

Its subcellular location is the secreted. In terms of biological role, has antimicrobial activity against Gram-negative bacterium E.coli ATCC 8739 (MIC=50 ug) and against Gram positive bacteria S.aureus ATCC 6538 (MIC=25 ug). Has no activity against methicillin-resistant S.aureus ATCC 43300, B.subtilis ATCC 6633 and against fungus C.albicans ATCC 90028. This Odorrana ishikawae (Ishikawa's frog) protein is Brevinin-2ISc.